The following is a 314-amino-acid chain: Taste receptor type 2 member 42 (314 aa).

The Extracellular segment spans residues 1–7 (MATELDK). A helical membrane pass occupies residues 8–28 (IFLTLAIVEFIIGMLGNVFIG). At 29 to 50 (LANCSEGIKNQKVFSVDFILTC) the chain is on the cytoplasmic side. A helical transmembrane segment spans residues 51–71 (LAISTIGHLLVILFDSHVAGL). Over 72–101 (APHLYATDRVVRPVTVLWHMTNHLTTWLAT) the chain is Extracellular. A helical transmembrane segment spans residues 102–122 (CLSIFYFFKIAHFPHSLFLWL). The Cytoplasmic portion of the chain corresponds to 123–127 (RWRMN). A helical transmembrane segment spans residues 128 to 148 (RVIAILLTLSLFLLIFDCLVL). The Extracellular portion of the chain corresponds to 149–187 (EMFIDISLNIIDKSNLTLYLDESKTPYDKLFLLKTLLSL). A glycan (N-linked (GlcNAc...) asparagine) is linked at N163. Residues 188–208 (NSFIPFSLCLTSLLFLFLSLV) form a helical membrane-spanning segment. The Cytoplasmic segment spans residues 209-238 (RHTRNLKLSSLGSRDSSTEAHRRAMKMVMS). Residues 239–259 (FLFLFIVHFFSLQVANWTFCI) traverse the membrane as a helical segment. The Extracellular portion of the chain corresponds to 260-265 (LGNNKY). A helical transmembrane segment spans residues 266 to 286 (TQFVMLALHAFPSCHSFILIL). At 287–314 (GNSKLRQTAVRLLWHLRNYTKRPNPLPL) the chain is on the cytoplasmic side.

Belongs to the G-protein coupled receptor T2R family.

The protein localises to the membrane. Its function is as follows. Receptor that may play a role in the perception of bitterness and is gustducin-linked. May play a role in sensing the chemical composition of the gastrointestinal content. The activity of this receptor may stimulate alpha gustducin, mediate PLC-beta-2 activation and lead to the gating of TRPM5. The chain is Taste receptor type 2 member 42 (TAS2R42) from Papio hamadryas (Hamadryas baboon).